A 293-amino-acid polypeptide reads, in one-letter code: 4-hydroxy-tetrahydrodipicolinate synthase (293 aa).

Threonine 47 serves as a coordination point for pyruvate. Tyrosine 136 serves as the catalytic Proton donor/acceptor. Residue lysine 164 is the Schiff-base intermediate with substrate of the active site. Isoleucine 206 is a binding site for pyruvate.

Belongs to the DapA family. Homotetramer; dimer of dimers.

It localises to the cytoplasm. The catalysed reaction is L-aspartate 4-semialdehyde + pyruvate = (2S,4S)-4-hydroxy-2,3,4,5-tetrahydrodipicolinate + H2O + H(+). The protein operates within amino-acid biosynthesis; L-lysine biosynthesis via DAP pathway; (S)-tetrahydrodipicolinate from L-aspartate: step 3/4. Its function is as follows. Catalyzes the condensation of (S)-aspartate-beta-semialdehyde [(S)-ASA] and pyruvate to 4-hydroxy-tetrahydrodipicolinate (HTPA). The polypeptide is 4-hydroxy-tetrahydrodipicolinate synthase (Listeria welshimeri serovar 6b (strain ATCC 35897 / DSM 20650 / CCUG 15529 / CIP 8149 / NCTC 11857 / SLCC 5334 / V8)).